We begin with the raw amino-acid sequence, 340 residues long: Deubiquitinase SseL (340 aa).

His223 is a catalytic residue. The active-site Nucleophile is the Cys285.

This sequence belongs to the peptidase C79 family.

It localises to the secreted. Its subcellular location is the host cytoplasm. Functionally, effector proteins function to alter host cell physiology and promote bacterial survival in host tissues. This protease targets the host cell ubiquitin pathway by acting as a deubiquitinase in infected host cells. The sequence is that of Deubiquitinase SseL (sseL) from Salmonella paratyphi A (strain ATCC 9150 / SARB42).